The chain runs to 270 residues: Formamidopyrimidine-DNA glycosylase (270 aa).

Pro-2 serves as the catalytic Schiff-base intermediate with DNA. The Proton donor role is filled by Glu-3. Lys-57 serves as the catalytic Proton donor; for beta-elimination activity. Residues His-90, Arg-109, and Lys-150 each coordinate DNA. The segment at 235–269 (QIYGKKGCPCPKCGQKIESFTVGQRNSYVCLHCQK) adopts an FPG-type zinc-finger fold. Catalysis depends on Arg-259, which acts as the Proton donor; for delta-elimination activity.

Belongs to the FPG family. As to quaternary structure, monomer. Zn(2+) is required as a cofactor.

The catalysed reaction is Hydrolysis of DNA containing ring-opened 7-methylguanine residues, releasing 2,6-diamino-4-hydroxy-5-(N-methyl)formamidopyrimidine.. The enzyme catalyses 2'-deoxyribonucleotide-(2'-deoxyribose 5'-phosphate)-2'-deoxyribonucleotide-DNA = a 3'-end 2'-deoxyribonucleotide-(2,3-dehydro-2,3-deoxyribose 5'-phosphate)-DNA + a 5'-end 5'-phospho-2'-deoxyribonucleoside-DNA + H(+). Functionally, involved in base excision repair of DNA damaged by oxidation or by mutagenic agents. Acts as a DNA glycosylase that recognizes and removes damaged bases. Has a preference for oxidized purines, such as 7,8-dihydro-8-oxoguanine (8-oxoG). Has AP (apurinic/apyrimidinic) lyase activity and introduces nicks in the DNA strand. Cleaves the DNA backbone by beta-delta elimination to generate a single-strand break at the site of the removed base with both 3'- and 5'-phosphates. This Actinobacillus succinogenes (strain ATCC 55618 / DSM 22257 / CCUG 43843 / 130Z) protein is Formamidopyrimidine-DNA glycosylase.